A 482-amino-acid chain; its full sequence is Bifunctional protein GlmU (482 aa).

The interval M1 to R238 is pyrophosphorylase. UDP-N-acetyl-alpha-D-glucosamine is bound by residues L12–G15, K26, Q79, and G84–T85. D110 serves as a coordination point for Mg(2+). Residues G147, E163, N178, and N236 each coordinate UDP-N-acetyl-alpha-D-glucosamine. N236 contacts Mg(2+). The linker stretch occupies residues V239 to A259. Positions G260–D482 are N-acetyltransferase. Positions 341 and 359 each coordinate UDP-N-acetyl-alpha-D-glucosamine. H371 acts as the Proton acceptor in catalysis. 2 residues coordinate UDP-N-acetyl-alpha-D-glucosamine: Y374 and N385. Acetyl-CoA is bound by residues A388, N394–Y395, S413, A431, and R448.

It in the N-terminal section; belongs to the N-acetylglucosamine-1-phosphate uridyltransferase family. This sequence in the C-terminal section; belongs to the transferase hexapeptide repeat family. Homotrimer. The cofactor is Mg(2+).

The protein localises to the cytoplasm. The enzyme catalyses alpha-D-glucosamine 1-phosphate + acetyl-CoA = N-acetyl-alpha-D-glucosamine 1-phosphate + CoA + H(+). It catalyses the reaction N-acetyl-alpha-D-glucosamine 1-phosphate + UTP + H(+) = UDP-N-acetyl-alpha-D-glucosamine + diphosphate. The protein operates within nucleotide-sugar biosynthesis; UDP-N-acetyl-alpha-D-glucosamine biosynthesis; N-acetyl-alpha-D-glucosamine 1-phosphate from alpha-D-glucosamine 6-phosphate (route II): step 2/2. It participates in nucleotide-sugar biosynthesis; UDP-N-acetyl-alpha-D-glucosamine biosynthesis; UDP-N-acetyl-alpha-D-glucosamine from N-acetyl-alpha-D-glucosamine 1-phosphate: step 1/1. Its pathway is bacterial outer membrane biogenesis; LPS lipid A biosynthesis. Functionally, catalyzes the last two sequential reactions in the de novo biosynthetic pathway for UDP-N-acetylglucosamine (UDP-GlcNAc). The C-terminal domain catalyzes the transfer of acetyl group from acetyl coenzyme A to glucosamine-1-phosphate (GlcN-1-P) to produce N-acetylglucosamine-1-phosphate (GlcNAc-1-P), which is converted into UDP-GlcNAc by the transfer of uridine 5-monophosphate (from uridine 5-triphosphate), a reaction catalyzed by the N-terminal domain. The sequence is that of Bifunctional protein GlmU from Streptomyces avermitilis (strain ATCC 31267 / DSM 46492 / JCM 5070 / NBRC 14893 / NCIMB 12804 / NRRL 8165 / MA-4680).